The primary structure comprises 339 residues: Putative P2Y purinoceptor 10 (339 aa).

Topologically, residues 1–39 (MANLDKYTETFKMGSNSTSTAEIYCNVTNVKFQYSLYAT) are extracellular. N16 and N26 each carry an N-linked (GlcNAc...) asparagine glycan. A helical transmembrane segment spans residues 40–60 (TYILIFIPGLLANSAALWVLC). Residues 61-68 (RFISKKNK) lie on the Cytoplasmic side of the membrane. Residues 69–89 (AIIFMINLSVADLAHVLSLPL) form a helical membrane-spanning segment. Residues 90 to 103 (RIYYYISHHWPFQR) lie on the Extracellular side of the membrane. Residues 104–124 (ALCLLCFYLKYLNMYASICFL) form a helical membrane-spanning segment. C106 and C181 are disulfide-bonded. Residues 125–149 (TCISLQRCFFLLKPFRARDWKRRYD) lie on the Cytoplasmic side of the membrane. A helical membrane pass occupies residues 150–170 (VGISAAIWIVVGTACLPFPIL). Over 171–193 (RSTDLNNNKSCFADLGYKQMNAV) the chain is Extracellular. The N-linked (GlcNAc...) asparagine glycan is linked to N178. Residues 194-214 (ALVGMITVAELAGFVIPVIII) traverse the membrane as a helical segment. Residues 215 to 244 (AWCTWKTTISLRQPPMAFQGISERQKALRM) are Cytoplasmic-facing. A helical membrane pass occupies residues 245–265 (VFMCAAVFFICFTPYHINFIF). Residues 266 to 288 (YTMVKETIISSCPVVRIALYFHP) lie on the Extracellular side of the membrane. Residues 289–309 (FCLCLASLCCLLDPILYYFMA) traverse the membrane as a helical segment. Residues 310 to 339 (SEFRDQLSRHGSSVTRSRLMSKESGSSMIG) are Cytoplasmic-facing.

This sequence belongs to the G-protein coupled receptor 1 family. In terms of tissue distribution, weakly expressed in blood leukocytes.

It localises to the cell membrane. In terms of biological role, putative receptor for purines coupled to G-proteins. The polypeptide is Putative P2Y purinoceptor 10 (P2RY10) (Homo sapiens (Human)).